The following is a 280-amino-acid chain: Shikimate dehydrogenase (NADP(+)) (280 aa).

Shikimate contacts are provided by residues 23–25 and T70; that span reads SLS. The Proton acceptor role is filled by K74. Shikimate contacts are provided by N95 and D111. Residues 135–139, 158–163, and I221 contribute to the NADP(+) site; these read GSGGA and NRTISK. Y223 contributes to the shikimate binding site. NADP(+) is bound at residue G247.

Belongs to the shikimate dehydrogenase family. In terms of assembly, homodimer.

It carries out the reaction shikimate + NADP(+) = 3-dehydroshikimate + NADPH + H(+). It participates in metabolic intermediate biosynthesis; chorismate biosynthesis; chorismate from D-erythrose 4-phosphate and phosphoenolpyruvate: step 4/7. In terms of biological role, involved in the biosynthesis of the chorismate, which leads to the biosynthesis of aromatic amino acids. Catalyzes the reversible NADPH linked reduction of 3-dehydroshikimate (DHSA) to yield shikimate (SA). The protein is Shikimate dehydrogenase (NADP(+)) of Buchnera aphidicola subsp. Cinara cedri (strain Cc).